A 303-amino-acid chain; its full sequence is MQDFSSLLLKLQEYWKNQGCLVIQPYDIPAGAGTFHPATLLRSLDKKPWNVAYVAPSRRPTDGRYGENPNRLGSYYQFQVVIKPSPSNIQELYLKSLEVLGINLNEHDIRFVEDNWESPTLGAWGLGWEVWLDGMEVTQFTYFQQVGGIACSPIPVEITYGLERLAMYVQKVENILEIEWAKKNHDSVNYAQVHLESEYEFSKYHFETASVKRLLEMFKNAQAEALHCLENKLPLPAYDFVMLCSHFFNILDARKAISVAERQNYILQIRDLAKGCALLYKEQEEEREERLKNALTKAENGVS.

The protein belongs to the class-II aminoacyl-tRNA synthetase family. Tetramer of two alpha and two beta subunits.

The protein resides in the cytoplasm. It catalyses the reaction tRNA(Gly) + glycine + ATP = glycyl-tRNA(Gly) + AMP + diphosphate. This chain is Glycine--tRNA ligase alpha subunit (glyQ), found in Helicobacter pylori (strain ATCC 700392 / 26695) (Campylobacter pylori).